A 106-amino-acid polypeptide reads, in one-letter code: UPF0060 membrane protein RHE_CH01408 (106 aa).

4 consecutive transmembrane segments (helical) span residues Ile-4 to Leu-24, Ala-30 to Val-50, Phe-59 to Gly-79, and Asp-86 to Ala-106.

It belongs to the UPF0060 family.

The protein resides in the cell inner membrane. The sequence is that of UPF0060 membrane protein RHE_CH01408 from Rhizobium etli (strain ATCC 51251 / DSM 11541 / JCM 21823 / NBRC 15573 / CFN 42).